A 377-amino-acid polypeptide reads, in one-letter code: Nitric oxide reductase FlRd-NAD(+) reductase (377 aa).

It belongs to the FAD-dependent oxidoreductase family. It depends on FAD as a cofactor.

Its subcellular location is the cytoplasm. It carries out the reaction 2 reduced [nitric oxide reductase rubredoxin domain] + NAD(+) + H(+) = 2 oxidized [nitric oxide reductase rubredoxin domain] + NADH. Its pathway is nitrogen metabolism; nitric oxide reduction. Functionally, one of at least two accessory proteins for anaerobic nitric oxide (NO) reductase. Reduces the rubredoxin moiety of NO reductase. The protein is Nitric oxide reductase FlRd-NAD(+) reductase of Escherichia coli O9:H4 (strain HS).